The sequence spans 291 residues: MATKPLSFQRLILTLHDYWSDQGCLILQPYDMEMGAGTFHPSTTLRALGPQPWKAAYVQPSRRPTDGRYGENPNRLGHYYQYQVILKPSPANLQELYLGSLERIGIDPLAHDIRFVEDDWESPTLGAWGLGWEVWCDGMEVTQFTYFQQVGGFDCKPVAGELTYGLERLAMYIQGVDRVYDLAFNDEGVTYGDVFLENERQFSAYNFEAANTDTLFKQFTQAADECRALLERDRPLPLPAYDQAIKASHIFNTLQARGVISVAERQAYIGRVRDLAKGACAAWMAHNGWEA.

It belongs to the class-II aminoacyl-tRNA synthetase family. In terms of assembly, tetramer of two alpha and two beta subunits.

It localises to the cytoplasm. It carries out the reaction tRNA(Gly) + glycine + ATP = glycyl-tRNA(Gly) + AMP + diphosphate. In Rhizorhabdus wittichii (strain DSM 6014 / CCUG 31198 / JCM 15750 / NBRC 105917 / EY 4224 / RW1) (Sphingomonas wittichii), this protein is Glycine--tRNA ligase alpha subunit.